Reading from the N-terminus, the 363-residue chain is GDSL esterase/lipase At2g24560 (363 aa).

Positions 1–22 (MSTSKTITFTLFIAALLSSCDA) are cleaved as a signal peptide. An N-linked (GlcNAc...) asparagine glycan is attached at Asn25. Ser41 serves as the catalytic Nucleophile. N-linked (GlcNAc...) asparagine glycans are attached at residues Asn103 and Asn325. Active-site residues include Asp333 and His336.

The protein belongs to the 'GDSL' lipolytic enzyme family.

Its subcellular location is the secreted. This chain is GDSL esterase/lipase At2g24560, found in Arabidopsis thaliana (Mouse-ear cress).